Reading from the N-terminus, the 279-residue chain is Ribosomal RNA small subunit methyltransferase A (279 aa).

Residues H11, L13, G42, E63, D88, and N104 each contribute to the S-adenosyl-L-methionine site.

Belongs to the class I-like SAM-binding methyltransferase superfamily. rRNA adenine N(6)-methyltransferase family. RsmA subfamily.

It is found in the cytoplasm. It carries out the reaction adenosine(1518)/adenosine(1519) in 16S rRNA + 4 S-adenosyl-L-methionine = N(6)-dimethyladenosine(1518)/N(6)-dimethyladenosine(1519) in 16S rRNA + 4 S-adenosyl-L-homocysteine + 4 H(+). Specifically dimethylates two adjacent adenosines (A1518 and A1519) in the loop of a conserved hairpin near the 3'-end of 16S rRNA in the 30S particle. May play a critical role in biogenesis of 30S subunits. The sequence is that of Ribosomal RNA small subunit methyltransferase A from Synechococcus sp. (strain JA-3-3Ab) (Cyanobacteria bacterium Yellowstone A-Prime).